The primary structure comprises 237 residues: tRNA1(Val) (adenine(37)-N6)-methyltransferase (237 aa).

It belongs to the methyltransferase superfamily. tRNA (adenine-N(6)-)-methyltransferase family.

The protein localises to the cytoplasm. It catalyses the reaction adenosine(37) in tRNA1(Val) + S-adenosyl-L-methionine = N(6)-methyladenosine(37) in tRNA1(Val) + S-adenosyl-L-homocysteine + H(+). Specifically methylates the adenine in position 37 of tRNA(1)(Val) (anticodon cmo5UAC). The chain is tRNA1(Val) (adenine(37)-N6)-methyltransferase from Pasteurella multocida (strain Pm70).